A 315-amino-acid chain; its full sequence is Microtubule-associated protein Jupiter (315 aa).

A compositionally biased stretch (polar residues) spans 1–14; sequence MISNFDCTDNQASS. Disordered stretches follow at residues 1–37 and 51–89; these read MISN…QTPR and EKDN…PGKN. Position 24 is a phosphoserine (Ser-24). Position 35 is a phosphothreonine (Thr-35). Over residues 62–76 the composition is skewed to basic and acidic residues; that stretch reads APRRGQKTVDSHSRL. A phosphothreonine mark is found at Thr-81 and Thr-85. Phosphoserine occurs at positions 94, 122, and 133. Disordered stretches follow at residues 116–166 and 272–315; these read YNGK…ADDA and EGNP…SGLW. The segment covering 120–133 has biased composition (low complexity); that stretch reads SGSVSSASSSVSSS. Composition is skewed to polar residues over residues 134–148 and 285–296; these read TENL…SVFR and DFTQRQESSNGG.

This sequence belongs to the MAP Jupiter family.

Its subcellular location is the nucleus. It localises to the cytoplasm. The protein localises to the cytoskeleton. The protein resides in the spindle. Its function is as follows. Binds to all microtubule populations. In Drosophila sechellia (Fruit fly), this protein is Microtubule-associated protein Jupiter.